Consider the following 44-residue polypeptide: Mu-conotoxin-like Cal 12.1.3b (44 aa).

Cystine bridges form between cysteine 3–cysteine 16, cysteine 11–cysteine 28, cysteine 18–cysteine 33, and cysteine 27–cysteine 38. 4-hydroxyproline is present on proline 23. 2 positions are modified to 6'-bromotryptophan: tryptophan 36 and tryptophan 37. Proline 39 is modified (4-hydroxyproline). 6'-bromotryptophan is present on tryptophan 43.

In terms of tissue distribution, expressed by the venom duct.

Its subcellular location is the secreted. Functionally, mu-conotoxins block voltage-gated sodium channels. This toxin reversibly blocks voltage-gated sodium channel in cephalopods, with no alteration in the voltage dependence of sodium conductance or on the kinetics of inactivation. The polypeptide is Mu-conotoxin-like Cal 12.1.3b (Californiconus californicus (California cone)).